We begin with the raw amino-acid sequence, 271 residues long: Probable redox regulatory protein SCO3349 (271 aa).

Disordered regions lie at residues 1 to 21 and 109 to 130; these read MPKT…KHIA and AEGT…TRPF. The span at 7–21 shows a compositional bias: basic and acidic residues; the sequence is AKDEKSAKKDKKHIA.

This sequence belongs to the Rv0495c family.

Essential for maintaining intracellular redox homeostasis. This is Probable redox regulatory protein SCO3349 from Streptomyces coelicolor (strain ATCC BAA-471 / A3(2) / M145).